We begin with the raw amino-acid sequence, 221 residues long: Guanylate kinase (221 aa).

A Guanylate kinase-like domain is found at G20 to A199. S27–T34 lines the ATP pocket.

This sequence belongs to the guanylate kinase family.

The protein resides in the cytoplasm. It catalyses the reaction GMP + ATP = GDP + ADP. Essential for recycling GMP and indirectly, cGMP. The polypeptide is Guanylate kinase (Novosphingobium aromaticivorans (strain ATCC 700278 / DSM 12444 / CCUG 56034 / CIP 105152 / NBRC 16084 / F199)).